The primary structure comprises 489 residues: FK506-binding protein 4 (489 aa).

Disordered stretches follow at residues 40-157 (PDET…GLEL) and 199-378 (GNYV…TTGT). Over residues 66–88 (MDIDESDDDYEEDSEEDSDDEEI) the composition is skewed to acidic residues. A compositionally biased stretch (basic and acidic residues) spans 93 to 109 (SDKEKARKLKEAAALKE). 3 stretches are compositionally biased toward acidic residues: residues 110–125 (LEDEDEDDDSEGDDEN), 143–157 (TDDDEDDESDEGLEL), and 208–250 (GPSE…DELD). Basic and acidic residues-rich tracts occupy residues 267 to 282 (APKLVESKGKNKRTAD), 292 to 303 (MMAKDGKAKGAD), and 328 to 353 (EQKKEAKVAKEGKEGKEGKEAKEAKK). The segment covering 362 to 378 (QGPTPSGQKPGETTTGT) has biased composition (polar residues). The PPIase FKBP-type domain maps to 406–489 (VAMRYIGKLE…IFDVKLLEIK (84 aa)).

It belongs to the FKBP-type PPIase family. FKBP3/4 subfamily. Binds to histones H3 and H4.

The protein resides in the nucleus. The enzyme catalyses [protein]-peptidylproline (omega=180) = [protein]-peptidylproline (omega=0). With respect to regulation, inhibited by both FK506 and rapamycin. PPIase that acts as a histone chaperone. Histone proline isomerase that increases the rate of cis-trans isomerization at prolines on the histone H3 N-terminal tail. Proline isomerization influences H3 methylation thereby regulating gene expression. This chain is FK506-binding protein 4 (fpr4), found in Aspergillus fumigatus (strain ATCC MYA-4609 / CBS 101355 / FGSC A1100 / Af293) (Neosartorya fumigata).